Here is a 223-residue protein sequence, read N- to C-terminus: Thiopurine S-methyltransferase (223 aa).

Trp10, Leu45, Glu66, and Arg127 together coordinate S-adenosyl-L-methionine.

This sequence belongs to the class I-like SAM-binding methyltransferase superfamily. TPMT family.

It is found in the cytoplasm. It carries out the reaction S-adenosyl-L-methionine + a thiopurine = S-adenosyl-L-homocysteine + a thiopurine S-methylether.. The sequence is that of Thiopurine S-methyltransferase from Shewanella woodyi (strain ATCC 51908 / MS32).